Consider the following 238-residue polypeptide: Proteasome subunit beta type-6 (238 aa).

A2 is subject to N-acetylalanine. A propeptide spans 2–33 (AAALAVRRAGSAPAFGPEALTPDWENREVSTG) (removed in mature form). T34 (nucleophile) is an active-site residue. Position 68 is a phosphothreonine (T68).

This sequence belongs to the peptidase T1B family. As to quaternary structure, the 26S proteasome consists of a 20S proteasome core and two 19S regulatory subunits. The 20S proteasome core is a barrel-shaped complex made of 28 subunits that are arranged in four stacked rings. The two outer rings are each formed by seven alpha subunits, and the two inner rings are formed by seven beta subunits. The proteolytic activity is exerted by three beta-subunits PSMB5, PSMB6 and PSMB7.

It is found in the cytoplasm. The protein resides in the nucleus. The catalysed reaction is Cleavage of peptide bonds with very broad specificity.. Its function is as follows. Component of the 20S core proteasome complex involved in the proteolytic degradation of most intracellular proteins. This complex plays numerous essential roles within the cell by associating with different regulatory particles. Associated with two 19S regulatory particles, forms the 26S proteasome and thus participates in the ATP-dependent degradation of ubiquitinated proteins. The 26S proteasome plays a key role in the maintenance of protein homeostasis by removing misfolded or damaged proteins that could impair cellular functions, and by removing proteins whose functions are no longer required. Associated with the PA200 or PA28, the 20S proteasome mediates ubiquitin-independent protein degradation. This type of proteolysis is required in several pathways including spermatogenesis (20S-PA200 complex) or generation of a subset of MHC class I-presented antigenic peptides (20S-PA28 complex). Within the 20S core complex, PSMB6 displays a peptidylglutamyl-hydrolyzing activity also termed postacidic or caspase-like activity, meaning that the peptides bond hydrolysis occurs directly after acidic residues. The chain is Proteasome subunit beta type-6 (Psmb6) from Mus musculus (Mouse).